A 188-amino-acid chain; its full sequence is dCTP deaminase (188 aa).

DCTP is bound by residues 111–116, 135–137, Gln156, Tyr170, and Gln180; these read KSTYAR and TLE. Catalysis depends on Glu137, which acts as the Proton donor/acceptor.

Belongs to the dCTP deaminase family. In terms of assembly, homotrimer.

The enzyme catalyses dCTP + H2O + H(+) = dUTP + NH4(+). The protein operates within pyrimidine metabolism; dUMP biosynthesis; dUMP from dCTP (dUTP route): step 1/2. In terms of biological role, catalyzes the deamination of dCTP to dUTP. The chain is dCTP deaminase from Thioalkalivibrio sulfidiphilus (strain HL-EbGR7).